A 35-amino-acid chain; its full sequence is Mu-thomitoxin-Hme1c (35 aa).

Cystine bridges form between Cys-2/Cys-18, Cys-9/Cys-23, and Cys-17/Cys-34.

The protein belongs to the neurotoxin 07 (Beta/delta-agtx) family. In terms of tissue distribution, expressed by the venom gland.

Its subcellular location is the secreted. In terms of biological role, gating-modifier toxin that inhibits mammalian and insect voltage-gated sodium channels. It shifts the voltage dependence of channel activation to more positive voltages. It shows potent activity on Nav1.4/SCN4A (IC(50)=103 nM), Nav1.5/SCN5A (IC(50)=268 nM) and Para/DmNav1 (IC(50)=555 nM) and lower activities on Nav1.2/SCN2A (IC(50)=1447 nM) and Nav1.6/SCN8A (IC(50)=3504 nM). In addition, at a concentration of 1 uM, the toxin inhibits 90-100% of sodium current through Nav1.2/SCN2A, Nav1.4/SCN4A, Nav1.5/SCN5A, Nav1.6/SCN8A and Para/DmNav1 channels, when the voltage of maximal activation of the channel in control conditions is applied. It binds to the S3-S4 helix-loop-helix motif in the voltage-sensing domain of repeat 1 (shown on hNav1.4/SCN4A). The toxin is amphiphilic and binds to both neutral and negatively charged lipid vesicles with high affinity. The hydrophobic face lies on the opposite side to the hydrophobic faces of classical gating modifiers. This Heriaeus mellotteei (Crab spider) protein is Mu-thomitoxin-Hme1c.